The sequence spans 188 residues: Putative nucleotidase OB0422 (188 aa).

Belongs to the 5'(3')-deoxyribonucleotidase family.

The sequence is that of Putative nucleotidase OB0422 from Oceanobacillus iheyensis (strain DSM 14371 / CIP 107618 / JCM 11309 / KCTC 3954 / HTE831).